The sequence spans 540 residues: Upstream-binding protein 1 (540 aa).

Position 22 is a phosphoserine (serine 22). A Grh/CP2 DB domain is found at 60 to 296 (EHPPFQYVMC…EQKKSSKRTL (237 aa)). Disordered stretches follow at residues 236–270 (KPKGADRKQKTDREKMEKRTAHEKEKYQPSYDTTI) and 285–368 (EHEQ…QPSA). Over residues 238-262 (KGADRKQKTDREKMEKRTAHEKEKY) the composition is skewed to basic and acidic residues. Residues 320–368 (YVNNSPSPAPTFTSPQQSTCSVPDSNSSSPNHQGDGASQTSGEQIQPSA) show a composition bias toward polar residues. Serine 390 and serine 393 each carry phosphoserine.

Belongs to the grh/CP2 family. CP2 subfamily. Interacts with TFCP2. Interacts with PIAS1, and is probably part of a complex containing TFCP2, UBP1 and PIAS1. In terms of tissue distribution, expressed in adrenal tissue, JEG-3, NCI-H295A, Hep-G2 and HeLa cell lines.

The protein resides in the nucleus. Its function is as follows. Functions as a transcriptional activator in a promoter context-dependent manner. Modulates the placental expression of CYP11A1. Involved in regulation of the alpha-globin gene in erythroid cells. Activation of the alpha-globin promoter in erythroid cells is via synergistic interaction with TFCP2. Involved in regulation of the alpha-globin gene in erythroid cells. Binds strongly to sequences around the HIV-1 initiation site and weakly over the TATA-box. Represses HIV-1 transcription by inhibiting the binding of TFIID to the TATA-box. The protein is Upstream-binding protein 1 (UBP1) of Homo sapiens (Human).